Consider the following 230-residue polypeptide: Heptaprenylglyceryl phosphate synthase (230 aa).

Sn-glycerol 1-phosphate is bound at residue Lys12. Positions 14 and 40 each coordinate Mg(2+). Residues 159-164, Gly189, and 209-210 contribute to the sn-glycerol 1-phosphate site; these read YIEYSG and GD.

This sequence belongs to the GGGP/HepGP synthase family. Group I subfamily. In terms of assembly, homodimer. Requires Mg(2+) as cofactor.

The enzyme catalyses sn-glycerol 1-phosphate + all-trans-heptaprenyl diphosphate = 3-heptaprenyl-sn-glycero-1-phosphate + diphosphate. Its pathway is membrane lipid metabolism; glycerophospholipid metabolism. In terms of biological role, prenyltransferase that catalyzes in vivo the transfer of the heptaprenyl moiety of heptaprenyl pyrophosphate (HepPP; 35 carbon atoms) to the C3 hydroxyl of sn-glycerol-1-phosphate (G1P), producing heptaprenylglyceryl phosphate (HepGP). This reaction is an ether-bond-formation step in the biosynthesis of archaea-type G1P-based membrane lipids found in Bacillales. The protein is Heptaprenylglyceryl phosphate synthase of Staphylococcus aureus (strain Mu3 / ATCC 700698).